We begin with the raw amino-acid sequence, 280 residues long: Orotidine 5'-phosphate decarboxylase (280 aa).

K96 serves as the catalytic Proton donor.

Belongs to the OMP decarboxylase family. Type 2 subfamily.

It catalyses the reaction orotidine 5'-phosphate + H(+) = UMP + CO2. It functions in the pathway pyrimidine metabolism; UMP biosynthesis via de novo pathway; UMP from orotate: step 2/2. The sequence is that of Orotidine 5'-phosphate decarboxylase from Parabacteroides distasonis (strain ATCC 8503 / DSM 20701 / CIP 104284 / JCM 5825 / NCTC 11152).